Here is a 437-residue protein sequence, read N- to C-terminus: Minor fimbrial subunit HifE (437 aa).

The N-terminal stretch at Met-1–Ala-30 is a signal peptide.

The protein belongs to the fimbrial protein family.

The protein resides in the fimbrium. Functionally, may be a minor structural protein required for pilus biogenesis. May be the adhesive component in the pili. The chain is Minor fimbrial subunit HifE (hifE) from Haemophilus influenzae.